Consider the following 773-residue polypeptide: Immunoglobulin domain and leucine-rich repeat-containing protein 2 (773 aa).

Residues 1-20 (MRKFVFFVVAILIQIHTTTS) form the signal peptide. Residues 21-493 (QRNRSSSPSG…DWYSYDVFNS (473 aa)) lie on the Extracellular side of the membrane. LRR repeat units follow at residues 52-73 (TRNIQCFSIDESKLLEIQKIYG), 74-96 (SNIQRLELHNWQHDQLNFDIFAP), 97-120 (FPQLEHIILRDGDLESLNGTVIHP), 122-144 (LKVLSIENSELTSSSEVCRLLSI), 145-167 (FPKIQSLSLSKNYFEKFECDTSN), and 168-191 (TKLKILDLSQNRISHLEVPNTLRV). An N-linked (GlcNAc...) asparagine glycan is attached at N114. Residue N204 is glycosylated (N-linked (GlcNAc...) asparagine). 4 LRR repeats span residues 206 to 230 (STKLTDLDISFNKLSLWPSFDDWKF), 233 to 251 (LRSLSAIKLDLQTGFQLDA), 252 to 275 (PLLNSLNIDGASLRYLNFHQILTP), and 296 to 319 (PSTVTDVAFTDTMLRTLPADFIPM). The Ig-like domain maps to 349 to 479 (PVYAQTSIRK…GKDYGIYHFR (131 aa)). N361 and N379 each carry an N-linked (GlcNAc...) asparagine glycan. C396 and C463 form a disulfide bridge. The helical transmembrane segment at 494-514 (VFWGGLATSLIVCLISFLLNI) threads the bilayer. Residues 515–773 (TWILTRKSAL…RSPDSPPEKR (259 aa)) are Cytoplasmic-facing. Residues 725 to 773 (VRPGIIPTNAPSIRFTTKPTTSSISNEASTSSPSSSGAHRSPDSPPEKR) form a disordered region. The segment covering 733–745 (NAPSIRFTTKPTT) has biased composition (polar residues). Positions 746–763 (SSISNEASTSSPSSSGAH) are enriched in low complexity. The span at 764–773 (RSPDSPPEKR) shows a compositional bias: basic and acidic residues.

It is found in the membrane. This chain is Immunoglobulin domain and leucine-rich repeat-containing protein 2, found in Caenorhabditis elegans.